The following is a 156-amino-acid chain: Small ribosomal subunit protein uS7c (156 aa).

It belongs to the universal ribosomal protein uS7 family. In terms of assembly, part of the 30S ribosomal subunit.

The protein resides in the plastid. The protein localises to the chloroplast. Functionally, one of the primary rRNA binding proteins, it binds directly to 16S rRNA where it nucleates assembly of the head domain of the 30S subunit. The chain is Small ribosomal subunit protein uS7c (rps7) from Gracilaria tenuistipitata var. liui (Red alga).